The following is a 158-amino-acid chain: SsrA-binding protein (158 aa).

The protein belongs to the SmpB family.

Its subcellular location is the cytoplasm. Functionally, required for rescue of stalled ribosomes mediated by trans-translation. Binds to transfer-messenger RNA (tmRNA), required for stable association of tmRNA with ribosomes. tmRNA and SmpB together mimic tRNA shape, replacing the anticodon stem-loop with SmpB. tmRNA is encoded by the ssrA gene; the 2 termini fold to resemble tRNA(Ala) and it encodes a 'tag peptide', a short internal open reading frame. During trans-translation Ala-aminoacylated tmRNA acts like a tRNA, entering the A-site of stalled ribosomes, displacing the stalled mRNA. The ribosome then switches to translate the ORF on the tmRNA; the nascent peptide is terminated with the 'tag peptide' encoded by the tmRNA and targeted for degradation. The ribosome is freed to recommence translation, which seems to be the essential function of trans-translation. The polypeptide is SsrA-binding protein (Symbiobacterium thermophilum (strain DSM 24528 / JCM 14929 / IAM 14863 / T)).